We begin with the raw amino-acid sequence, 581 residues long: Polypeptide N-acetylgalactosaminyltransferase 12 (581 aa).

The Cytoplasmic segment spans residues 1–19 (MWGRTARRRCPRELRRGRE). A helical; Signal-anchor for type II membrane protein transmembrane segment spans residues 20-37 (ALLVLLALLALAGLGSVL). At 38–581 (RAQRGAGAGA…QKWFFKERML (544 aa)) the chain is on the lumenal side. The tract at residues 43–67 (AGAGAAEPGPPRTPRPGRREPVMPR) is disordered. Disulfide bonds link C125–C358, C349–C422, C458–C479, C506–C521, and C547–C566. A catalytic subdomain A region spans residues 135-244 (LPRTSVIIAF…EGWLEPLLQR (110 aa)). D176 and R205 together coordinate substrate. D228 and H230 together coordinate Mn(2+). Positions 304–366 (VIRSPTMAGG…PCSHVGHVFP (63 aa)) are catalytic subdomain B. W335 serves as a coordination point for substrate. H363 is a Mn(2+) binding site. Y371 contacts substrate. The 133-residue stretch at 445-577 (FFGMLQNKGL…NSDHQKWFFK (133 aa)) folds into the Ricin B-type lectin domain.

It belongs to the glycosyltransferase 2 family. GalNAc-T subfamily. Mn(2+) is required as a cofactor. Widely expressed at different levels of expression. Highly expressed in digestive organs such as small intestine, stomach, pancreas and colon. Expressed at intermediate level in testis, thyroid gland and spleen. Weakly expressed in whole brain, cerebral cortex, cerebellum, fetal brain, bone marrow, thymus, leukocytes, heart, skeletal muscle, liver, lung, esophagus, kidney, adrenal gland, mammary gland, uterus, placenta, ovary and prostate.

The protein resides in the golgi apparatus membrane. The enzyme catalyses L-seryl-[protein] + UDP-N-acetyl-alpha-D-galactosamine = a 3-O-[N-acetyl-alpha-D-galactosaminyl]-L-seryl-[protein] + UDP + H(+). It carries out the reaction L-threonyl-[protein] + UDP-N-acetyl-alpha-D-galactosamine = a 3-O-[N-acetyl-alpha-D-galactosaminyl]-L-threonyl-[protein] + UDP + H(+). The protein operates within protein modification; protein glycosylation. Its function is as follows. Catalyzes the initial reaction in O-linked oligosaccharide biosynthesis, the transfer of an N-acetyl-D-galactosamine residue to a serine or threonine residue on the protein receptor. Has activity toward non-glycosylated peptides such as Muc5AC, Muc1a and EA2, and no detectable activity with Muc2 and Muc7. Displays enzymatic activity toward the Gal-NAc-Muc5AC glycopeptide, but no detectable activity to mono-GalNAc-glycosylated Muc1a, Muc2, Muc7 and EA2. May play an important role in the initial step of mucin-type oligosaccharide biosynthesis in digestive organs. This is Polypeptide N-acetylgalactosaminyltransferase 12 (GALNT12) from Homo sapiens (Human).